The sequence spans 698 residues: MSKSSPIEPVSASDVSQQFRDPGLYLNRELSQLDFNFRVLAQALDEQVPLLERLRFLCISCTNLDEFFEIRVATVRHAQEFGLPPAPDGMRPTVILNAVHDLTTKLVHDQYNCWNQVLCPALAALGVGVLSHNSWNARQKRWLRGYFRNEIMPVLSPLGLDPAHPFPKIFNKTLNIVVVLNGIDAFGRAGHLAIVRAPRSLPRIIELPQHLSRDGSQNFVFLSSVLSAFVGELFPGMVVRGAYQFRVTRNSELVVDEDEVENLALALRNELVTRGYRLAVRLEIAEDCPTPIVRTLLQNFGLQENAVYRINGPVNLSRVSQVYDMVLRPELKYPPFNPRTLRNSDHIFEIIAKGDVLLYHPYDAFTAVLDLLRQAAADPDVLAIKQTLYRTGKDSTIVDALIQAARSGKDVTVVVELRARFDEEANLGLADKLQEAGVQVVYGVVGYKTHAKMLLIVRREGRKLRRYVHLGTGNYHSGTARIYTDLSLMTANAAIGKDVHQLFLQLSGLAPKMKLECLLQSPFTLHAGVLFRIERETKFARKGRPARIVAKMNALNEPQVVRALYVASQAGVQIDLIVRGACTLRPGVQDISENIRVRSIVGRFLEHSRVYWFANNGTPELFCASADWLERNLLRRVEICFPILNPDLAKRIYSDVLQSYLDDNLNAWELGSDGVYRKLLPETDHAPYSAQVALLESL.

Residue asparagine 63 coordinates ATP. 2 residues coordinate Mg(2+): arginine 390 and arginine 420. Residue histidine 450 is the Phosphohistidine intermediate of the active site. 3 residues coordinate ATP: tyrosine 483, arginine 579, and histidine 607.

The protein belongs to the polyphosphate kinase 1 (PPK1) family. Requires Mg(2+) as cofactor. An intermediate of this reaction is the autophosphorylated ppk in which a phosphate is covalently linked to a histidine residue through a N-P bond.

It catalyses the reaction [phosphate](n) + ATP = [phosphate](n+1) + ADP. Functionally, catalyzes the reversible transfer of the terminal phosphate of ATP to form a long-chain polyphosphate (polyP). This is Polyphosphate kinase from Xylella fastidiosa (strain 9a5c).